The primary structure comprises 65 residues: Large ribosomal subunit protein uL30 (65 aa).

This sequence belongs to the universal ribosomal protein uL30 family. In terms of assembly, part of the 50S ribosomal subunit.

This Aster yellows witches'-broom phytoplasma (strain AYWB) protein is Large ribosomal subunit protein uL30.